Reading from the N-terminus, the 513-residue chain is 2-isopropylmalate synthase (513 aa).

One can recognise a Pyruvate carboxyltransferase domain in the interval 5–268; that stretch reads LIIFDTTLRD…DLRVDTSQIV (264 aa). Residues aspartate 14, histidine 202, histidine 204, and asparagine 239 each coordinate Mn(2+). The segment at 394–513 is regulatory domain; the sequence is RLLALSQHSE…SKAERVAAQG (120 aa).

The protein belongs to the alpha-IPM synthase/homocitrate synthase family. LeuA type 1 subfamily. In terms of assembly, homodimer. Mn(2+) serves as cofactor.

The protein localises to the cytoplasm. It carries out the reaction 3-methyl-2-oxobutanoate + acetyl-CoA + H2O = (2S)-2-isopropylmalate + CoA + H(+). Its pathway is amino-acid biosynthesis; L-leucine biosynthesis; L-leucine from 3-methyl-2-oxobutanoate: step 1/4. Catalyzes the condensation of the acetyl group of acetyl-CoA with 3-methyl-2-oxobutanoate (2-ketoisovalerate) to form 3-carboxy-3-hydroxy-4-methylpentanoate (2-isopropylmalate). In Leptothrix cholodnii (strain ATCC 51168 / LMG 8142 / SP-6) (Leptothrix discophora (strain SP-6)), this protein is 2-isopropylmalate synthase.